A 91-amino-acid polypeptide reads, in one-letter code: Large ribosomal subunit protein bL31B (91 aa).

It belongs to the bacterial ribosomal protein bL31 family. Type B subfamily. In terms of assembly, part of the 50S ribosomal subunit.

In Mycolicibacterium vanbaalenii (strain DSM 7251 / JCM 13017 / BCRC 16820 / KCTC 9966 / NRRL B-24157 / PYR-1) (Mycobacterium vanbaalenii), this protein is Large ribosomal subunit protein bL31B.